The following is a 150-amino-acid chain: Large ribosomal subunit protein bL9 (150 aa).

Belongs to the bacterial ribosomal protein bL9 family.

Binds to the 23S rRNA. This chain is Large ribosomal subunit protein bL9, found in Shewanella baltica (strain OS155 / ATCC BAA-1091).